The following is a 96-amino-acid chain: Probable quinol oxidase subunit 4 (96 aa).

The next 3 helical transmembrane spans lie at T8–T28, L36–H56, and F68–M88.

This sequence belongs to the cytochrome c oxidase bacterial subunit 4 family.

It is found in the cell membrane. The enzyme catalyses 2 a quinol + O2 = 2 a quinone + 2 H2O. Catalyzes quinol oxidation with the concomitant reduction of oxygen to water. This is Probable quinol oxidase subunit 4 (qoxD) from Staphylococcus aureus (strain USA300).